Here is a 525-residue protein sequence, read N- to C-terminus: Histidine-rich glycoprotein (525 aa).

The first 18 residues, 1–18, serve as a signal peptide directing secretion; that stretch reads MKALIAALLLITLQYSCA. Cystatin domains lie at 19–136 and 137–254; these read VSPT…SALA and NTKD…NING. Intrachain disulfides connect Cys-24-Cys-504, Cys-78-Cys-89, Cys-105-Cys-126, Cys-203-Cys-417, and Cys-218-Cys-241. Residues 41-84 are interaction with ATP5F1A; sequence RRRDGYLFQLLRIADAHLDRVENTTVYYLVLDVQESDCSVLSRK. Residue Asn-63 is glycosylated (N-linked (GlcNAc...) asparagine). Asn-125 carries an N-linked (GlcNAc...) asparagine glycan. The segment at 252–407 is disordered; it reads INGVPPHLGH…GHHPHGHHPH (156 aa). The segment covering 284-293 has biased composition (basic residues); the sequence is RDHHHPHKPH. Positions 310-320 are enriched in pro residues; the sequence is PPLPQGPPPLL. A compositionally biased stretch (polar residues) spans 323-348; the sequence is SCSSCQHATFGTNGAQRHSHNNNSSD. N-linked (GlcNAc...) asparagine glycans are attached at residues Asn-344 and Asn-345. Residues 348–382 form a necessary for endothelial cell focal adhesions and anti-angiogenic activities region; sequence DLHPHKHHSHEQHPHGHHPHAHHPHEHDTHRQHPH. Composition is skewed to basic residues over residues 351 to 371 and 379 to 407; these read PHKH…AHHP and QHPH…HHPH.

Interacts (via the HRR domain) with TPM1; the interaction appears to contribute to the antiangiogenic properties of the HRR domain. Interacts with THBS2; the interaction blocks the antiangiogenic effect of THBS2 with CD36. Interacts with THBS1 (via the TSP type I repeats); the interaction blocks the antiangiogenic effect of THBS1 with CD3. Interacts with PLG (via its Kringle domains); the interaction tethers PLG to the cell surface and enhances its activation. Interacts with HPSE; the interaction is enhanced at acidic pH, partially inhibits binding of HPSE to cell surface receptors and modulates its enzymatic activity. Interacts (via the HRR domain) with TMP1; the interaction partially mediates the antiangiogenic properties of HRG. Interacts with kappa and lambda light chains of IgG molecules. Interacts with ATP5F1A; the interaction occurs on the surface of T-cells and alters their cell morphology in concert with CONA. Binds IgG molecules containing kappa and lambda light chains and inhibits the formation of insoluble immunoglobulin complexes. Interacts with F12; the interaction, which is enhanced in the presence of zinc ions and inhibited by heparin-binding to HRG, inhibits factor XII autoactivation and contact-initiated coagulation. Zn(2+) serves as cofactor. Post-translationally, proteolytic cleavage produces several HRG fragments which are mostly disulfide-linked and, therefore, not released. Cleavage by plasmin is inhibited in the presence of heparin, zinc ions or in an acidic environment. Cleavage reduces binding of HRG to heparan sulfate, but enhances the ability of HRG to bind and tether plasminogen to the cell surface. On platelet activation, releases a 33 kDa antiangiogenic peptide which encompasses the HRR. Also cleaved in the C-terminal by plasmin. In terms of processing, N-glycosylated. As to expression, expressed in macrophages and in malignant cells. Expressed by the liver and secreted in plasma (at protein level).

It localises to the secreted. In terms of biological role, plasma glycoprotein that binds a number of ligands such as heme, heparin, heparan sulfate, thrombospondin, plasminogen, and divalent metal ions. Binds heparin and heparin/glycosaminoglycans in a zinc-dependent manner. Binds heparan sulfate on the surface of liver, lung, kidney and heart endothelial cells. Binds to N-sulfated polysaccharide chains on the surface of liver endothelial cells. Inhibits rosette formation. Acts as an adapter protein and is implicated in regulating many processes such as immune complex and pathogen clearance, cell chemotaxis, cell adhesion, angiogenesis, coagulation and fibrinolysis. Mediates clearance of necrotic cells through enhancing the phagocytosis of necrotic cells in a heparan sulfate-dependent pathway. This process can be regulated by the presence of certain HRG ligands such as heparin and zinc ions. Binds to IgG subclasses of immunoglobins containing kappa and lambda light chains with different affinities regulating their clearance and inhibiting the formation of insoluble immune complexes. Tethers plasminogen to the cell surface. Binds T-cells and alters the cell morphology. Modulates angiogenesis by blocking the CD6-mediated antiangiongenic effect of thrombospondins, THBS1 and THBS2. Acts as a regulator of the vascular endothelial growth factor (VEGF) signaling pathway; inhibits endothelial cell motility by reducing VEGF-induced complex formation between PXN/paxillin and ILK/integrin-linked protein kinase and by promoting inhibition of VEGF-induced tyrosine phosphorylation of focal adhesion kinases and alpha-actinins in endothelial cells. Also plays a role in the regulation of tumor angiogenesis and tumor immune surveillance. Normalizes tumor vessels and promotes antitumor immunity by polarizing tumor-associated macrophages, leading to decreased tumor growth and metastasis. This chain is Histidine-rich glycoprotein (HRG), found in Homo sapiens (Human).